Reading from the N-terminus, the 186-residue chain is Oligoribonuclease (186 aa).

An Exonuclease domain is found at 8–171 (LIWIDLEMTG…DDIRESIAEL (164 aa)). The active site involves Tyr-129.

This sequence belongs to the oligoribonuclease family.

It localises to the cytoplasm. In terms of biological role, 3'-to-5' exoribonuclease specific for small oligoribonucleotides. This Mannheimia succiniciproducens (strain KCTC 0769BP / MBEL55E) protein is Oligoribonuclease.